Here is a 435-residue protein sequence, read N- to C-terminus: Diaminobutyrate--2-oxoglutarate transaminase (435 aa).

The residue at position 266 (Lys-266) is an N6-(pyridoxal phosphate)lysine.

Belongs to the class-III pyridoxal-phosphate-dependent aminotransferase family. Requires pyridoxal 5'-phosphate as cofactor.

The catalysed reaction is L-2,4-diaminobutanoate + 2-oxoglutarate = L-aspartate 4-semialdehyde + L-glutamate. It functions in the pathway amine and polyamine biosynthesis; ectoine biosynthesis; L-ectoine from L-aspartate 4-semialdehyde: step 1/3. In terms of biological role, catalyzes reversively the conversion of L-aspartate beta-semialdehyde (ASA) to L-2,4-diaminobutyrate (DABA) by transamination with L-glutamate. This Bordetella bronchiseptica (strain ATCC BAA-588 / NCTC 13252 / RB50) (Alcaligenes bronchisepticus) protein is Diaminobutyrate--2-oxoglutarate transaminase (ectB).